We begin with the raw amino-acid sequence, 1188 residues long: MAGHDVQYGKHRTRRSFSRIKEVLDLPNLIEIQTDSFQDFLDSGLKEVFEDVLPISNFTDTMELEFVGYEFKEPKYTLEEARIHDASYSAPIFVTFRLINKETGEIKTQEVFFGDFPIMTEMGTFIINGGERIIVSQLVRSPGVYFNDKVDKNGKVGYGSTVIPNRGAWLELETDSKDIAYTRIDRTRKIPFTTLVRALGFSGDDEIIDIFGDSELVRNTIEKDIHKNQSDSRTDEALKEIYERLRPGEPKTADSSRSLLTARFFDARRYDLAAVGRYKINKKLNIKTRLLNQIIAENLIDSETGEILVEAGTEMTRSVIESIEEQLDGDLNKFVYTPNDYAVVTEPVILQKFKVVSPVDPDRVVTIVGNANPDDKVRALTPADILAEMSYFLNLAEGLGKVDDIDHLGNRRIRAVGELLANQFRIGLARMERNVRERMSVQDNDVLTPQQIINIRPVTAAVKEFFGSSQLSQFMDQHNPLSELSHKRRLSALGPGGLTRDRAGYEVRDVHYTHYGRMCPIETPEGPNIGLINNLSSFGHLNKYGFIQTPYRKVDRVIGRVTNEIVWLTADEEDEFTVAQANSKLNPDGTFAEEIVMGRHQGNNQEFPASQVDFVDVSPKQVVAVATACIPFLENDDSNRALMGANMQRQAVPLIDPKAPYVGTGMEYQAAHDSGAAVIAQHNGKVVFSDAERVEVRREDGSLDVYHITKFRRSNSGTAYNQRTLVKIGDIVEKGDFIADGPSMEKGEMALGQNPIVAYMTWEGYNFEDAVIMSERLVKEDVYTSVHLEEFESETRDTKLGPEEITREVPNVGEEALKDLDEMGIIRIGAEVKEGDILVGKVTPKGEKDLSAEERLLHAIFGDKSREVRDTSLRVPHGGDGIVRDVKIFTRANGDELQSGVNMLVRVYIAQKRKIKVGDKMAGRHGNKGVVSRIVPVEDMPYLPDGTPVDIMLNPLGVPSRMNIGQVMELHLGMAARNLGIHIATPVFDGATSEDLWETVREAGMDSDAKTVLYDGRTGEPFDNRVSVGVMYMIKLHHMVDDKLHARSVGPYSLVTQQPLGGKAQFGGQRFGEMEVWALEAYGASNVLQEILTYKSDDVNGRLKAYEAITKGKPIPKPGVPESFRVLVKELQSLGLDMRVLDEDDNEVELRDLDEGEDDDVMHVDDLEKAREKQAQETQEIAESTEDN.

It belongs to the RNA polymerase beta chain family. As to quaternary structure, the RNAP catalytic core consists of 2 alpha, 1 beta, 1 beta' and 1 omega subunit. When a sigma factor is associated with the core the holoenzyme is formed, which can initiate transcription.

The catalysed reaction is RNA(n) + a ribonucleoside 5'-triphosphate = RNA(n+1) + diphosphate. In terms of biological role, DNA-dependent RNA polymerase catalyzes the transcription of DNA into RNA using the four ribonucleoside triphosphates as substrates. In Streptococcus equi subsp. zooepidemicus (strain H70), this protein is DNA-directed RNA polymerase subunit beta.